We begin with the raw amino-acid sequence, 369 residues long: Cobalt-precorrin-5B C(1)-methyltransferase (369 aa).

It belongs to the CbiD family.

It carries out the reaction Co-precorrin-5B + S-adenosyl-L-methionine = Co-precorrin-6A + S-adenosyl-L-homocysteine. Its pathway is cofactor biosynthesis; adenosylcobalamin biosynthesis; cob(II)yrinate a,c-diamide from sirohydrochlorin (anaerobic route): step 6/10. Functionally, catalyzes the methylation of C-1 in cobalt-precorrin-5B to form cobalt-precorrin-6A. The chain is Cobalt-precorrin-5B C(1)-methyltransferase from Methanococcus vannielii (strain ATCC 35089 / DSM 1224 / JCM 13029 / OCM 148 / SB).